We begin with the raw amino-acid sequence, 71 residues long: Antitoxin VapB22 (71 aa).

It belongs to the phD/YefM antitoxin family.

In terms of biological role, antitoxin component of a type II toxin-antitoxin (TA) system. Upon expression in M.smegmatis neutralizes the effect of cognate toxin VapC22. This is Antitoxin VapB22 (vapB22) from Mycobacterium tuberculosis (strain ATCC 25618 / H37Rv).